The chain runs to 207 residues: Superoxide dismutase [Mn] (207 aa).

Positions 28, 76, 160, and 164 each coordinate Mn(2+).

The protein belongs to the iron/manganese superoxide dismutase family. The cofactor is Mn(2+).

It carries out the reaction 2 superoxide + 2 H(+) = H2O2 + O2. Functionally, destroys superoxide anion radicals which are normally produced within the cells and which are toxic to biological systems. This Mycobacterium leprae (strain TN) protein is Superoxide dismutase [Mn] (sodA).